Here is a 477-residue protein sequence, read N- to C-terminus: tRNA-2-methylthio-N(6)-dimethylallyladenosine synthase (477 aa).

The MTTase N-terminal domain occupies 3–120 (KKLFIKTWGC…LPEMINQIKG (118 aa)). C12, C49, C83, C157, C161, and C164 together coordinate [4Fe-4S] cluster. The Radical SAM core domain maps to 143-375 (KAEGPTAFVS…QNRITQQALR (233 aa)). Residues 378-441 (RNMIDSEQRV…ANSLRGDVLR (64 aa)) form the TRAM domain.

The protein belongs to the methylthiotransferase family. MiaB subfamily. As to quaternary structure, monomer. Requires [4Fe-4S] cluster as cofactor.

The protein localises to the cytoplasm. It catalyses the reaction N(6)-dimethylallyladenosine(37) in tRNA + (sulfur carrier)-SH + AH2 + 2 S-adenosyl-L-methionine = 2-methylsulfanyl-N(6)-dimethylallyladenosine(37) in tRNA + (sulfur carrier)-H + 5'-deoxyadenosine + L-methionine + A + S-adenosyl-L-homocysteine + 2 H(+). Its function is as follows. Catalyzes the methylthiolation of N6-(dimethylallyl)adenosine (i(6)A), leading to the formation of 2-methylthio-N6-(dimethylallyl)adenosine (ms(2)i(6)A) at position 37 in tRNAs that read codons beginning with uridine. In Pseudoalteromonas atlantica (strain T6c / ATCC BAA-1087), this protein is tRNA-2-methylthio-N(6)-dimethylallyladenosine synthase.